The sequence spans 487 residues: Betaine aldehyde dehydrogenase (487 aa).

Residues isoleucine 27 and aspartate 93 each coordinate K(+). 149 to 151 is an NAD(+) binding site; that stretch reads GAW. The active-site Charge relay system is lysine 161. Residues 175-178 and 228-231 contribute to the NAD(+) site; these read KPSE and SVPT. K(+) is bound at residue leucine 243. Glutamate 249 (proton acceptor) is an active-site residue. Residues glycine 251, cysteine 283, and glutamate 384 each contribute to the NAD(+) site. The active-site Nucleophile is the cysteine 283. Cysteine 283 carries the cysteine sulfenic acid (-SOH) modification. The K(+) site is built by lysine 454 and glycine 457. Glutamate 461 (charge relay system) is an active-site residue.

It belongs to the aldehyde dehydrogenase family. Dimer of dimers. Requires K(+) as cofactor.

It catalyses the reaction betaine aldehyde + NAD(+) + H2O = glycine betaine + NADH + 2 H(+). Its pathway is amine and polyamine biosynthesis; betaine biosynthesis via choline pathway; betaine from betaine aldehyde: step 1/1. Involved in the biosynthesis of the osmoprotectant glycine betaine. Catalyzes the irreversible oxidation of betaine aldehyde to the corresponding acid. This Brucella suis (strain ATCC 23445 / NCTC 10510) protein is Betaine aldehyde dehydrogenase.